The following is a 133-amino-acid chain: Vascular endothelial growth factor homolog (133 aa).

Positions 1 to 20 (MKLLVGILVAVCLHQYLLNA) are cleaved as a signal peptide. 3 disulfide bridges follow: Cys36/Cys78, Cys67/Cys112, and Cys71/Cys114. The N-linked (GlcNAc...) asparagine; by host glycan is linked to Asn85.

Belongs to the PDGF/VEGF growth factor family. In terms of assembly, homodimer; disulfide-linked.

It localises to the secreted. Functionally, induces endothelial proliferation. This Orf virus (strain NZ2) (OV NZ-2) protein is Vascular endothelial growth factor homolog.